We begin with the raw amino-acid sequence, 589 residues long: Inactive poly [ADP-ribose] polymerase RCD1 (589 aa).

The region spanning 64-153 (KLSAYENRSG…ETGAKTPLAW (90 aa)) is the WWE domain. One can recognise a PARP catalytic domain in the interval 248–469 (EAAVSKWDET…LIAKRDNSGV (222 aa)). Disordered stretches follow at residues 464–504 (RDNS…TRPK) and 569–589 (QPKS…AGGL). The segment covering 481–503 (LESNQGARGSGSANSVGSSTTRP) has biased composition (polar residues). Positions 501-572 (TRPKSPWMPF…ITTLQNQPKS (72 aa)) constitute an RST domain. Basic and acidic residues predominate over residues 571–589 (KSKEIPGSIRDHEEGAGGL).

As to quaternary structure, interacts with the transcription factors NAC013/NTL1 and NAC046. Interacts with dehydration-responsive DREB2 proteins and a number of transcription factors belonging to several protein families. Interacts with turnip crinkle virus (TCV) movement protein P8. As to expression, expressed in young developing tissues, such as young leaves and flowers and root tips. In mature plants, expressed in vasculature of leaves and roots, and guard cells.

It localises to the nucleus matrix. Functionally, inactive ADP-ribosyltransferase that functions with SRO1 to regulate oxidative stress, hormonal and developmental responses. Required for embryogenesis, vegetative and reproductive development, and abiotic stress responses. May regulate several stress-responsive genes. Seems to play a larger developmental role than SRO1. Does not bind NAD in vitro. This is Inactive poly [ADP-ribose] polymerase RCD1 (RCD1) from Arabidopsis thaliana (Mouse-ear cress).